Here is a 286-residue protein sequence, read N- to C-terminus: Protease HtpX homolog (286 aa).

2 helical membrane-spanning segments follow: residues 7 to 27 (TFMLMAAITALFIVIGGMIGG) and 29 to 49 (SGMMLALLFALGMNFFSYWFS). A Zn(2+)-binding site is contributed by His-131. Residue Glu-132 is part of the active site. Position 135 (His-135) interacts with Zn(2+). Helical transmembrane passes span 146 to 166 (ISATMAGAISALANFAVFFGG) and 177 to 197 (IAGIAVAILAPLAAAMIQMAI). Residue Glu-202 participates in Zn(2+) binding.

Belongs to the peptidase M48B family. The cofactor is Zn(2+).

Its subcellular location is the cell inner membrane. The protein is Protease HtpX homolog of Ralstonia pickettii (strain 12J).